A 631-amino-acid polypeptide reads, in one-letter code: 1-deoxy-D-xylulose-5-phosphate synthase (631 aa).

Residues His73 and Gly114 to Ser116 contribute to the thiamine diphosphate site. Asp145 contributes to the Mg(2+) binding site. Thiamine diphosphate contacts are provided by residues Gly146–Ala147, Asn174, Tyr285, and Glu366. Residue Asn174 participates in Mg(2+) binding.

It belongs to the transketolase family. DXPS subfamily. Homodimer. Mg(2+) serves as cofactor. Thiamine diphosphate is required as a cofactor.

It catalyses the reaction D-glyceraldehyde 3-phosphate + pyruvate + H(+) = 1-deoxy-D-xylulose 5-phosphate + CO2. It functions in the pathway metabolic intermediate biosynthesis; 1-deoxy-D-xylulose 5-phosphate biosynthesis; 1-deoxy-D-xylulose 5-phosphate from D-glyceraldehyde 3-phosphate and pyruvate: step 1/1. In terms of biological role, catalyzes the acyloin condensation reaction between C atoms 2 and 3 of pyruvate and glyceraldehyde 3-phosphate to yield 1-deoxy-D-xylulose-5-phosphate (DXP). The sequence is that of 1-deoxy-D-xylulose-5-phosphate synthase from Desulfitobacterium hafniense (strain DSM 10664 / DCB-2).